Consider the following 181-residue polypeptide: Probable inosine/xanthosine triphosphatase (181 aa).

Residue D65 coordinates Mg(2+).

The protein belongs to the YjjX NTPase family. Homodimer. Mg(2+) serves as cofactor. Mn(2+) is required as a cofactor.

It catalyses the reaction XTP + H2O = XDP + phosphate + H(+). The catalysed reaction is ITP + H2O = IDP + phosphate + H(+). In terms of biological role, phosphatase that hydrolyzes non-canonical purine nucleotides such as XTP and ITP to their respective diphosphate derivatives. Probably excludes non-canonical purines from DNA/RNA precursor pool, thus preventing their incorporation into DNA/RNA and avoiding chromosomal lesions. The chain is Probable inosine/xanthosine triphosphatase from Caldivirga maquilingensis (strain ATCC 700844 / DSM 13496 / JCM 10307 / IC-167).